The sequence spans 329 residues: Glycerol-3-phosphate dehydrogenase [NAD(P)+] (329 aa).

Ser13, Trp14, His34, and Lys105 together coordinate NADPH. Sn-glycerol 3-phosphate is bound by residues Lys105, Gly134, and Ser136. Ala138 contributes to the NADPH binding site. The sn-glycerol 3-phosphate site is built by Lys189, Asp242, Ser252, Arg253, and Asn254. Lys189 (proton acceptor) is an active-site residue. An NADPH-binding site is contributed by Arg253. NADPH contacts are provided by Val277 and Glu279.

The protein belongs to the NAD-dependent glycerol-3-phosphate dehydrogenase family.

Its subcellular location is the cytoplasm. The catalysed reaction is sn-glycerol 3-phosphate + NAD(+) = dihydroxyacetone phosphate + NADH + H(+). It carries out the reaction sn-glycerol 3-phosphate + NADP(+) = dihydroxyacetone phosphate + NADPH + H(+). It functions in the pathway membrane lipid metabolism; glycerophospholipid metabolism. Its function is as follows. Catalyzes the reduction of the glycolytic intermediate dihydroxyacetone phosphate (DHAP) to sn-glycerol 3-phosphate (G3P), the key precursor for phospholipid synthesis. This Legionella pneumophila (strain Paris) protein is Glycerol-3-phosphate dehydrogenase [NAD(P)+].